The following is a 198-amino-acid chain: Imidazoleglycerol-phosphate dehydratase (198 aa).

The protein belongs to the imidazoleglycerol-phosphate dehydratase family.

Its subcellular location is the cytoplasm. The enzyme catalyses D-erythro-1-(imidazol-4-yl)glycerol 3-phosphate = 3-(imidazol-4-yl)-2-oxopropyl phosphate + H2O. It participates in amino-acid biosynthesis; L-histidine biosynthesis; L-histidine from 5-phospho-alpha-D-ribose 1-diphosphate: step 6/9. The chain is Imidazoleglycerol-phosphate dehydratase from Gluconacetobacter diazotrophicus (strain ATCC 49037 / DSM 5601 / CCUG 37298 / CIP 103539 / LMG 7603 / PAl5).